The chain runs to 423 residues: Gamma-glutamyl phosphate reductase (423 aa).

It belongs to the gamma-glutamyl phosphate reductase family.

The protein localises to the cytoplasm. It carries out the reaction L-glutamate 5-semialdehyde + phosphate + NADP(+) = L-glutamyl 5-phosphate + NADPH + H(+). It participates in amino-acid biosynthesis; L-proline biosynthesis; L-glutamate 5-semialdehyde from L-glutamate: step 2/2. In terms of biological role, catalyzes the NADPH-dependent reduction of L-glutamate 5-phosphate into L-glutamate 5-semialdehyde and phosphate. The product spontaneously undergoes cyclization to form 1-pyrroline-5-carboxylate. The polypeptide is Gamma-glutamyl phosphate reductase (Paracoccus denitrificans (strain Pd 1222)).